A 1230-amino-acid polypeptide reads, in one-letter code: Formin-like protein 14 (1230 aa).

Residues 1-194 form the Phosphatase tensin-type domain; that stretch reads MSLLSRFFYK…QYVARRNINS (194 aa). Cysteine 127 serves as the catalytic Phosphocysteine intermediate. A C2 tensin-type domain is found at 200 to 339; sequence ERALSLDCVI…FRAEVLFGEV (140 aa). 3 disordered regions span residues 412–432, 460–822, and 1187–1230; these read FNSP…SSDE, HESS…LKPL, and ENEK…RHRT. The segment covering 484–496 has biased composition (low complexity); sequence DNPLNLPSDPPSS. Pro residues-rich tracts occupy residues 503–514, 524–535, 545–556, and 566–575; these read LPPPPPPPPPPL, SQPPPPPPPPPL, and SQPPPPPPLP. Polar residues predominate over residues 579 to 591; the sequence is NRDPLTTLHQPIN. Pro residues-rich tracts occupy residues 592-630, 637-649, 660-672, 679-688, 699-711, 718-728, and 735-766; these read KTPP…PPPS, PSAP…PPPS, QPPP…PPTR, APPPPPPPPT, PSTP…PPPK, PKPPAPPPLPP, and APPP…PPPG. The 399-residue stretch at 809 to 1207 folds into the FH2 domain; it reads VPTAAPKKTA…KLEKEAIKEK (399 aa). A compositionally biased stretch (basic and acidic residues) spans 1187 to 1215; it reads ENEKQAEAEKKKLEKEAIKEKSATKKDGV.

It belongs to the formin-like family. Class-II subfamily.

In Arabidopsis thaliana (Mouse-ear cress), this protein is Formin-like protein 14 (FH14).